A 475-amino-acid chain; its full sequence is Glucose-6-phosphate 1-dehydrogenase gcd1 (475 aa).

The NADP(+) site is built by Arg-42 and Lys-146. Lys-146, Glu-214, and Asp-233 together coordinate D-glucose 6-phosphate. The active-site Proton acceptor is the His-238. Lys-332 lines the D-glucose 6-phosphate pocket. The NADP(+) site is built by Arg-342 and Arg-365.

The protein belongs to the glucose-6-phosphate dehydrogenase family.

It localises to the cytoplasm. The catalysed reaction is D-glucose 6-phosphate + NADP(+) = 6-phospho-D-glucono-1,5-lactone + NADPH + H(+). The protein operates within carbohydrate degradation; pentose phosphate pathway; D-ribulose 5-phosphate from D-glucose 6-phosphate (oxidative stage): step 1/3. Its function is as follows. Catalyzes the rate-limiting step of the oxidative pentose-phosphate pathway, which represents a route for the dissimilation of carbohydrates besides glycolysis. The main function of this enzyme is to provide reducing power (NADPH) and pentose phosphates for fatty acid and nucleic acid synthesis. The sequence is that of Glucose-6-phosphate 1-dehydrogenase gcd1 from Schizosaccharomyces pombe (strain 972 / ATCC 24843) (Fission yeast).